A 345-amino-acid chain; its full sequence is L-threonine 3-dehydrogenase (345 aa).

Cys39 is a binding site for Zn(2+). Active-site charge relay system residues include Thr41 and His44. Positions 64, 65, 94, 97, 100, and 108 each coordinate Zn(2+). NAD(+) contacts are provided by residues Ile176, Asp196, Arg201, 263 to 265, and 287 to 288; these read LGI and VY.

It belongs to the zinc-containing alcohol dehydrogenase family. Homotetramer. Requires Zn(2+) as cofactor.

Its subcellular location is the cytoplasm. It catalyses the reaction L-threonine + NAD(+) = (2S)-2-amino-3-oxobutanoate + NADH + H(+). It functions in the pathway amino-acid degradation; L-threonine degradation via oxydo-reductase pathway; glycine from L-threonine: step 1/2. Catalyzes the NAD(+)-dependent oxidation of L-threonine to 2-amino-3-ketobutyrate. In Anaeromyxobacter dehalogenans (strain 2CP-C), this protein is L-threonine 3-dehydrogenase.